Here is a 520-residue protein sequence, read N- to C-terminus: GMP synthase [glutamine-hydrolyzing] (520 aa).

Residues 12–202 (KIIVLDFGSQ…AFDVCGCTGD (191 aa)) form the Glutamine amidotransferase type-1 domain. Cys89 serves as the catalytic Nucleophile. Residues His176 and Glu178 contribute to the active site. One can recognise a GMPS ATP-PPase domain in the interval 203–395 (WSMENFIDME…LGMPDAIVWR (193 aa)). An ATP-binding site is contributed by 230-236 (SGGVDSS).

Homodimer.

It carries out the reaction XMP + L-glutamine + ATP + H2O = GMP + L-glutamate + AMP + diphosphate + 2 H(+). Its pathway is purine metabolism; GMP biosynthesis; GMP from XMP (L-Gln route): step 1/1. Its function is as follows. Catalyzes the synthesis of GMP from XMP. This chain is GMP synthase [glutamine-hydrolyzing], found in Enterococcus faecalis (strain ATCC 700802 / V583).